The primary structure comprises 113 residues: Large ribosomal subunit protein uL22 (113 aa).

This sequence belongs to the universal ribosomal protein uL22 family. In terms of assembly, part of the 50S ribosomal subunit.

This protein binds specifically to 23S rRNA; its binding is stimulated by other ribosomal proteins, e.g. L4, L17, and L20. It is important during the early stages of 50S assembly. It makes multiple contacts with different domains of the 23S rRNA in the assembled 50S subunit and ribosome. In terms of biological role, the globular domain of the protein is located near the polypeptide exit tunnel on the outside of the subunit, while an extended beta-hairpin is found that lines the wall of the exit tunnel in the center of the 70S ribosome. The chain is Large ribosomal subunit protein uL22 from Xanthomonas axonopodis pv. citri (strain 306).